The following is a 393-amino-acid chain: S-adenosylmethionine sensor upstream of mTORC1 (393 aa).

The interval Met-1–Leu-35 is disordered. Arg-94 lines the S-adenosyl-L-methionine pocket. Positions Asp-118–Ser-141 are disordered. Low complexity predominate over residues Ala-125 to Ala-136. Residues Gly-160, Asp-178, Asp-190, Phe-191, and Ser-232 each coordinate S-adenosyl-L-methionine. The disordered stretch occupies residues Glu-362–Ser-393.

It belongs to the BMT2/SAMTOR family. In terms of assembly, interacts with the GATOR1 complex; interaction is disrupted when samtor binds S-adenosyl-L-methionine. Interacts with the KICSTOR complex; interaction is disrupted when bmt2/samtor binds S-adenosyl-L-methionine.

In terms of biological role, S-adenosyl-L-methionine-binding protein that acts as an inhibitor of mTORC1 signaling via interaction with the GATOR1 and KICSTOR complexes. Acts as a sensor of S-adenosyl-L-methionine to signal methionine sufficiency to mTORC1: in presence of methionine, binds S-adenosyl-L-methionine, leading to disrupt interaction with the GATOR1 and KICSTOR complexes and promote mTORC1 signaling. Upon methionine starvation, S-adenosyl-L-methionine levels are reduced, thereby promoting the association with GATOR1 and KICSTOR, leading to inhibit mTORC1 signaling. Probably also acts as a S-adenosyl-L-methionine-dependent methyltransferase. This chain is S-adenosylmethionine sensor upstream of mTORC1, found in Danio rerio (Zebrafish).